Consider the following 115-residue polypeptide: NADH-ubiquinone oxidoreductase chain 3 (115 aa).

Transmembrane regions (helical) follow at residues 4 to 24 (LTAL…AFWL), 55 to 75 (FFLV…LLPL), and 86 to 106 (VMML…AYEW).

It belongs to the complex I subunit 3 family. As to quaternary structure, core subunit of respiratory chain NADH dehydrogenase (Complex I) which is composed of 45 different subunits. Interacts with TMEM186. Interacts with TMEM242.

The protein resides in the mitochondrion inner membrane. The catalysed reaction is a ubiquinone + NADH + 5 H(+)(in) = a ubiquinol + NAD(+) + 4 H(+)(out). Functionally, core subunit of the mitochondrial membrane respiratory chain NADH dehydrogenase (Complex I) which catalyzes electron transfer from NADH through the respiratory chain, using ubiquinone as an electron acceptor. Essential for the catalytic activity of complex I. This Isthmomys pirrensis (Mount Pirri Isthmus rat) protein is NADH-ubiquinone oxidoreductase chain 3.